Consider the following 66-residue polypeptide: Type 3 secretion system chaperone YscE (66 aa).

Belongs to the YscE family. As to quaternary structure, component of the heterodimeric YscE-YscG chaperone. The YscE-YscG chaperone forms a stable ternary complex with YscF/SctF. YscE interacts with YscG, but makes very little direct contact with YscF. Homodimer in solution.

Its subcellular location is the cytoplasm. Functionally, chaperone of the type III secretion system (T3SS), also called injectisome, which is used to inject bacterial effector proteins into eukaryotic host cells. Along with YscG, prevents premature polymerization of the YscF/SctF needle protein within the cytoplasm. Is also required for stable expression of cytosolic YscF and for YscF secretion. Likely plays a role in targeting YscF present in the cytosolic YscEFG complex to the T3SS apparatus. Required for Yop secretion. The chain is Type 3 secretion system chaperone YscE from Yersinia pestis.